The sequence spans 463 residues: Glycogen synthase (463 aa).

ADP-alpha-D-glucose is bound at residue lysine 15.

The protein belongs to the glycosyltransferase 1 family. Bacterial/plant glycogen synthase subfamily.

It carries out the reaction [(1-&gt;4)-alpha-D-glucosyl](n) + ADP-alpha-D-glucose = [(1-&gt;4)-alpha-D-glucosyl](n+1) + ADP + H(+). Its pathway is glycan biosynthesis; glycogen biosynthesis. Its function is as follows. Synthesizes alpha-1,4-glucan chains using ADP-glucose. In Aquifex aeolicus (strain VF5), this protein is Glycogen synthase.